Here is an 80-residue protein sequence, read N- to C-terminus: uncharacterized protein (80 aa).

This is an uncharacterized protein from Invertebrate iridescent virus 6 (IIV-6).